Reading from the N-terminus, the 296-residue chain is MARCERLRGAALRDVVGRAQGVLFDCNGVLWNGERAVPGAPELLERLAQAGKATLFVSNNSRRARPELALRFARLGFGGLRSEQLFSSALCAARLLRQRLLGPPDTQGAVFVLGGEGLRAELRAAGLRLAGDPSEDPGAAPRVRAVLVGYDEHFSFAKLSEACAHLRDPDCLLVATDRDPWHPLSDGSRTPGTGSLAAAVETASGRQALVVGKPSPYMFECITEHFSVDPGRTLMVGDRLETDILFGHRCGMTTVLTLTGVSSLEEAQAYLAAGQHDLVPHYYVESIADLMEGLED.

D25 serves as the catalytic Nucleophile. Mg(2+)-binding residues include D25 and N27. The active-site Proton donor is N27. Residues 58-60 (SNN), H182, and K213 each bind substrate. Residue D238 participates in Mg(2+) binding.

Belongs to the HAD-like hydrolase superfamily. In terms of assembly, homodimer. The cofactor is Mg(2+). In terms of tissue distribution, detected in brain (at protein level).

It localises to the cytoplasm. The protein resides in the cytosol. Its subcellular location is the cytoskeleton. The protein localises to the cell projection. It is found in the ruffle membrane. It localises to the lamellipodium membrane. The protein resides in the cell membrane. It catalyses the reaction pyridoxal 5'-phosphate + H2O = pyridoxal + phosphate. The enzyme catalyses pyridoxine 5'-phosphate + H2O = pyridoxine + phosphate. It carries out the reaction pyridoxamine + phosphate = pyridoxamine 5'-phosphate + H2O. The catalysed reaction is O-phospho-L-seryl-[protein] + H2O = L-seryl-[protein] + phosphate. Its function is as follows. Functions as a pyridoxal phosphate (PLP) phosphatase, which also catalyzes the dephosphorylation of pyridoxine 5'-phosphate (PNP) and pyridoxamine 5'-phosphate (PMP), with order of substrate preference PLP &gt; PNP &gt; PMP and therefore plays a role in vitamin B6 metabolism. Also functions as a protein serine phosphatase that specifically dephosphorylates 'Ser-3' in proteins of the actin-depolymerizing factor (ADF)/cofilin family like CFL1 and DSTN. Thereby, regulates cofilin-dependent actin cytoskeleton reorganization, being required for normal progress through mitosis and normal cytokinesis. Does not dephosphorylate phosphothreonines in LIMK1. Does not dephosphorylate peptides containing phosphotyrosine. In Bos taurus (Bovine), this protein is Chronophin.